Here is a 257-residue protein sequence, read N- to C-terminus: Probable ABC transporter arginine-binding protein ArtJ (257 aa).

The first 23 residues, 1-23 (MCIKRKKTWIAFLAVVCSFCLTG), serve as a signal peptide directing secretion. Residues Asn41, Glu48, Gly100, Ser102, Arg107, and Tyr151 each coordinate L-arginine.

This sequence belongs to the bacterial solute-binding protein 3 family.

The protein resides in the secreted. It localises to the cell surface. In terms of biological role, probably part of an ABC transporter complex involved in arginine transport. Binds arginine. Interacts with host epithelial cells, suggesting a role in host-cell adhesion during infection. The chain is Probable ABC transporter arginine-binding protein ArtJ from Chlamydia trachomatis serovar D (strain ATCC VR-885 / DSM 19411 / UW-3/Cx).